A 251-amino-acid polypeptide reads, in one-letter code: 5'-nucleotidase SurE (251 aa).

A divalent metal cation contacts are provided by Asp-8, Asp-9, Ser-40, and Asn-95.

This sequence belongs to the SurE nucleotidase family. A divalent metal cation serves as cofactor.

Its subcellular location is the cytoplasm. It carries out the reaction a ribonucleoside 5'-phosphate + H2O = a ribonucleoside + phosphate. Its function is as follows. Nucleotidase that shows phosphatase activity on nucleoside 5'-monophosphates. The sequence is that of 5'-nucleotidase SurE from Lawsonia intracellularis (strain PHE/MN1-00).